A 135-amino-acid polypeptide reads, in one-letter code: Dihydromethanopterin reductase (135 aa).

NADP(+) is bound by residues alanine 9, 16–21 (LGLNGH), 52–54 (PKT), and 93–97 (GGIAV).

In terms of assembly, homodimer.

The enzyme catalyses 5,6,7,8-tetrahydromethanopterin + NAD(+) = 7,8-dihydromethanopterin + NADH + H(+). It catalyses the reaction 5,6,7,8-tetrahydromethanopterin + NADP(+) = 7,8-dihydromethanopterin + NADPH + H(+). It participates in cofactor biosynthesis; 5,6,7,8-tetrahydromethanopterin biosynthesis. Functionally, catalyzes the reduction of dihydromethanopterin (H(2)MPT) to tetrahydromethanopterin (H(4)MPT). Shows preference for NADPH rather than NADH as electron donor. Does not reduce dihydrofolate. The polypeptide is Dihydromethanopterin reductase (dmrA) (Methylorubrum extorquens (strain ATCC 14718 / DSM 1338 / JCM 2805 / NCIMB 9133 / AM1) (Methylobacterium extorquens)).